The primary structure comprises 349 residues: Xylitol-binding protein (349 aa).

Residues 1–22 form the signal peptide; it reads MNITSKIGAIAAAGAVGLGLTA. A lipid anchor (N-palmitoyl cysteine) is attached at cysteine 23. Cysteine 23 carries the S-diacylglycerol cysteine lipid modification. Residues tyrosine 42, asparagine 121, arginine 173, asparagine 224, aspartate 249, and glutamine 269 each coordinate xylitol.

It belongs to the bacterial solute-binding protein 2 family.

The protein resides in the cell membrane. In terms of biological role, part of an ABC transporter complex likely involved in xylitol import. Binds xylitol. This chain is Xylitol-binding protein, found in Mycolicibacterium smegmatis (strain ATCC 700084 / mc(2)155) (Mycobacterium smegmatis).